The sequence spans 846 residues: Patched domain-containing protein 4 (846 aa).

A run of 10 helical transmembrane segments spans residues 41 to 61 (HPVF…LSAL), 230 to 250 (SILA…TATL), 265 to 285 (GLLG…IFFI), 293 to 313 (TLLG…FELL), 336 to 356 (VMVT…MGAS), 373 to 393 (VSIL…LVFA), 465 to 485 (PFVV…CLQI), 660 to 680 (PVLI…FLVI), 686 to 706 (FWLI…MTLW), and 718 to 738 (LIYT…TFVL). An SSD domain is found at 233–392 (ARSKVLVSLV…FSFFGSCLVF (160 aa)). Asn762 carries an N-linked (GlcNAc...) asparagine glycan. 2 helical membrane-spanning segments follow: residues 765–785 (SFLI…FTLF) and 787–807 (CLLL…PVFL).

This sequence belongs to the patched family.

It is found in the membrane. Could act as a repressor of canonical hedgehog signaling by antagonizing the effects of SMO, as suggested by down-regulation of hedgehog target genes, including GLI1, PTCH1, and PTCH2 in PTCHD4-expressing cells. The polypeptide is Patched domain-containing protein 4 (PTCHD4) (Homo sapiens (Human)).